A 583-amino-acid polypeptide reads, in one-letter code: Proteasome-associated ATPase (583 aa).

Positions Met1–Asn19 are enriched in polar residues. The segment at Met1–Ser22 is disordered. The stretch at Ala24–Gln75 forms a coiled coil. Gly271–Leu276 lines the ATP pocket. The tract at residues Tyr582–Leu583 is docks into pockets in the proteasome alpha-ring.

It belongs to the AAA ATPase family. Homohexamer. Assembles into a hexameric ring structure that caps the 20S proteasome core. Strongly interacts with the prokaryotic ubiquitin-like protein Pup through a hydrophobic interface; the interacting region of ARC lies in its N-terminal coiled-coil domain. There is one Pup binding site per ARC hexamer ring. Upon ATP-binding, the C-terminus of ARC interacts with the alpha-rings of the proteasome core, possibly by binding to the intersubunit pockets.

The protein operates within protein degradation; proteasomal Pup-dependent pathway. ATPase which is responsible for recognizing, binding, unfolding and translocation of pupylated proteins into the bacterial 20S proteasome core particle. May be essential for opening the gate of the 20S proteasome via an interaction with its C-terminus, thereby allowing substrate entry and access to the site of proteolysis. Thus, the C-termini of the proteasomal ATPase may function like a 'key in a lock' to induce gate opening and therefore regulate proteolysis. The chain is Proteasome-associated ATPase from Pseudarthrobacter chlorophenolicus (strain ATCC 700700 / DSM 12829 / CIP 107037 / JCM 12360 / KCTC 9906 / NCIMB 13794 / A6) (Arthrobacter chlorophenolicus).